The following is a 233-amino-acid chain: Orotidine 5'-phosphate decarboxylase (233 aa).

Substrate-binding positions include aspartate 9, lysine 31, 58 to 67, threonine 120, arginine 182, glutamine 191, glycine 211, and arginine 212; that span reads DLKLHDIPNT. Lysine 60 functions as the Proton donor in the catalytic mechanism.

Belongs to the OMP decarboxylase family. Type 1 subfamily. As to quaternary structure, homodimer.

It carries out the reaction orotidine 5'-phosphate + H(+) = UMP + CO2. The protein operates within pyrimidine metabolism; UMP biosynthesis via de novo pathway; UMP from orotate: step 2/2. Catalyzes the decarboxylation of orotidine 5'-monophosphate (OMP) to uridine 5'-monophosphate (UMP). This is Orotidine 5'-phosphate decarboxylase from Listeria innocua serovar 6a (strain ATCC BAA-680 / CLIP 11262).